Here is a 304-residue protein sequence, read N- to C-terminus: NADH-cytochrome b5 reductase 2 (304 aa).

A helical transmembrane segment spans residues 6-26 (GTPVVVAVAAVAATVLLLLLL). The FAD-binding FR-type domain maps to 43–155 (QAKYPLPLVG…RGPNGLLVYK (113 aa)). FAD contacts are provided by residues 135–165 (DSMK…IKPD) and 174–209 (FAKH…KCYL).

This sequence belongs to the flavoprotein pyridine nucleotide cytochrome reductase family. FAD serves as cofactor.

The protein localises to the membrane. The catalysed reaction is 2 Fe(III)-[cytochrome b5] + NADH = 2 Fe(II)-[cytochrome b5] + NAD(+) + H(+). Functionally, NADH-cytochrome b5 reductases are involved in desaturation and elongation of fatty acids, cholesterol biosynthesis and drug metabolism. In Gallus gallus (Chicken), this protein is NADH-cytochrome b5 reductase 2 (CYB5R2).